The sequence spans 459 residues: MAP kinase-interacting serine/threonine-protein kinase 2 (459 aa).

A disordered region spans residues 37 to 67; it reads DFSPQCEARPDMPSSQPIDIPDAKKRGRKKK. A Nuclear localization signal motif is present at residues 60 to 66; sequence KKRGRKK. Serine 74 is modified (phosphoserine). The region spanning 84 to 368 is the Protein kinase domain; it reads QLQEDVLGEG…AAQVLQHPWV (285 aa). Residues 90–98 and lysine 113 contribute to the ATP site; that span reads LGEGAHARV. A staurosporine-binding site is contributed by 160–162; that stretch reads EKM. Aspartate 205 (proton acceptor) is an active-site residue. Glutamate 209 lines the staurosporine pocket. Phosphothreonine is present on residues threonine 244 and threonine 249. 3 residues coordinate Zn(2+): cysteine 299, cysteine 311, and cysteine 314. Threonine 379 bears the Phosphothreonine mark. A phosphoserine mark is found at serine 431 and serine 434. The short motif at 438-442 is the MAP kinase binding element; it reads LAQRR. A Phosphoserine modification is found at serine 446. Position 450 is a phosphothreonine (threonine 450).

This sequence belongs to the protein kinase superfamily. CAMK Ser/Thr protein kinase family. In terms of assembly, interacts with ESR2 and EIF4E in the nucleus. Monomer. Interacts with the C-terminal regions of EIF4G1 and EIF4G2; this interaction is promoted when MAPK pathways are repressed but repressed upon ERK proteins activation. Also binds to dephosphorylated MAPK3/ERK1 and MAPK1/ERK2. Interaction with phosphorylated MAPK3/ERK1 and MAPK1/ERK2 protects it from dephosphorylation and inactivation. Mg(2+) is required as a cofactor. Requires Zn(2+) as cofactor. Dual phosphorylation of Thr-244 and Thr-249 activates the kinase. Phosphorylation of Thr-379 activates the kinase. Phosphorylated upon arsenic trioxide As(2)O(3) treatment. Phosphorylated by MAPK1/ERK2, MAPK11 and MAPK14. Dephosphorylated by PP2A. Ubiquitously expressed in all tissues examined, with high levels in skeletal muscle and low levels in brain.

The protein resides in the cytoplasm. It localises to the nucleus. Its subcellular location is the PML body. It carries out the reaction L-seryl-[protein] + ATP = O-phospho-L-seryl-[protein] + ADP + H(+). The catalysed reaction is L-threonyl-[protein] + ATP = O-phospho-L-threonyl-[protein] + ADP + H(+). Its activity is regulated as follows. Inhibited by CGP57380 and staurosporine. Its function is as follows. Serine/threonine-protein kinase that phosphorylates SFPQ/PSF, HNRNPA1 and EIF4E. May play a role in the response to environmental stress and cytokines. Appears to regulate translation by phosphorylating EIF4E, thus increasing the affinity of this protein for the 7-methylguanosine-containing mRNA cap. Required for mediating PP2A-inhibition-induced EIF4E phosphorylation. Triggers EIF4E shuttling from cytoplasm to nucleus. Enhances the formation of EIF4F complex in pachytene spermatocytes, thus promoting mRNA translation during spermatogenesis. Displays a high basal kinase activity. Acts as a mediator of the suppressive effects of IFNgamma on hematopoiesis. Negative regulator for signals that control generation of arsenic trioxide As(2)O(3)-dependent apoptosis and anti-leukemic responses. Involved in anti-apoptotic signaling in response to serum withdrawal. The polypeptide is MAP kinase-interacting serine/threonine-protein kinase 2 (Mknk2) (Mus musculus (Mouse)).